Here is a 518-residue protein sequence, read N- to C-terminus: MQNLPKWKIVLSIICTVFAIICALPNFIQINSKFLPHDSINLGLDLRGGANLLLDVDFDTYLNDSMENLADTLRKNLRKHKIGYKNLLVRHNNIQLEVRSPEVLKSLKKIINKIDPEIIIGVNKNKIKLRYSESRFNDLLNKVVEQSIEIVRMRVDSTGTKEPTLQRQGNKHILLQVPGSENPSYLKNILGKTAKLTFHLVDENANIEDAIKGHVPLGSMLIKGDSKHHGEYYIVIKKKVLLSGAHLTKASASFDQNSQPIVAFSFNNLGSKIFGEITKNNTGKRLAIVLDNKLLSAPIINGAIIGGNGIITGNFTIESANELALLLRVGSLPTPLKIIEERSIGPNLGADSIESGKKAGLIGFVAVCIFMILSYGVIGLFANIALILALLYILALLSLFQATLTLPGIAGIILTIGMAVDANVLIYERIKEELHKGVSNLYAIRTGFESAFATIIDSNITTLIVAFALYIFGVGAIKGFAVALTIGIISSMFSAIIITKLLIDVWVKYFKPKKLGLL.

A run of 6 helical transmembrane segments spans residues 9 to 29 (IVLS…NFIQ), 356 to 376 (GKKA…LSYG), 377 to 397 (VIGL…LALL), 406 to 426 (LPGI…NVLI), 463 to 483 (LIVA…FAVA), and 486 to 506 (IGII…IDVW).

The protein belongs to the SecD/SecF family. SecD subfamily. In terms of assembly, forms a complex with SecF. Part of the essential Sec protein translocation apparatus which comprises SecA, SecYEG and auxiliary proteins SecDF-YajC and YidC.

It is found in the cell inner membrane. In terms of biological role, part of the Sec protein translocase complex. Interacts with the SecYEG preprotein conducting channel. SecDF uses the proton motive force (PMF) to complete protein translocation after the ATP-dependent function of SecA. The chain is Protein translocase subunit SecD from Rickettsia prowazekii (strain Madrid E).